Reading from the N-terminus, the 74-residue chain is Translation initiation factor IF-1 (74 aa).

One can recognise an S1-like domain in the interval 1 to 72; sequence MGKEDVIRME…TRGRIVYRKK (72 aa).

This sequence belongs to the IF-1 family. As to quaternary structure, component of the 30S ribosomal translation pre-initiation complex which assembles on the 30S ribosome in the order IF-2 and IF-3, IF-1 and N-formylmethionyl-tRNA(fMet); mRNA recruitment can occur at any time during PIC assembly.

It localises to the cytoplasm. Its function is as follows. One of the essential components for the initiation of protein synthesis. Stabilizes the binding of IF-2 and IF-3 on the 30S subunit to which N-formylmethionyl-tRNA(fMet) subsequently binds. Helps modulate mRNA selection, yielding the 30S pre-initiation complex (PIC). Upon addition of the 50S ribosomal subunit IF-1, IF-2 and IF-3 are released leaving the mature 70S translation initiation complex. The polypeptide is Translation initiation factor IF-1 (Thermotoga maritima (strain ATCC 43589 / DSM 3109 / JCM 10099 / NBRC 100826 / MSB8)).